The primary structure comprises 247 residues: Mast cell protease 2 (247 aa).

An N-terminal signal peptide occupies residues 1-18 (MQALLFLMALLLPSGAGA). Residues 19–20 (EE) constitute a propeptide, activation peptide. The region spanning 21-244 (IIGGVESIPH…YVPWINAVIN (224 aa)) is the Peptidase S1 domain. A disulfide bridge links Cys50 with Cys66. Active-site charge relay system residues include His65 and Asp109. Disulfide bonds link Cys143–Cys208 and Cys174–Cys187. Ser202 (charge relay system) is an active-site residue.

It belongs to the peptidase S1 family. Granzyme subfamily.

Functionally, this enzyme, isolated from small intestine, specifically inactivates the apo forms of a certain group of intracellular pyridoxal phosphate-requiring enzymes. It has chymotrypsin-like specificity towards small substrates. The polypeptide is Mast cell protease 2 (Mcpt2) (Rattus norvegicus (Rat)).